Reading from the N-terminus, the 624-residue chain is Chaperone protein HtpG (624 aa).

The segment at 1–336 (MKGQETRGFQ…SNDLPLNVSR (336 aa)) is a; substrate-binding. Positions 337-552 (EILQDSSVTR…ADEMSTQMAK (216 aa)) are b. The c stretch occupies residues 553–624 (LFAAAGQAAP…IRRMNQLLAS (72 aa)).

The protein belongs to the heat shock protein 90 family. Homodimer.

The protein localises to the cytoplasm. Functionally, molecular chaperone. Has ATPase activity. The sequence is that of Chaperone protein HtpG from Klebsiella pneumoniae subsp. pneumoniae (strain ATCC 700721 / MGH 78578).